The sequence spans 163 residues: Putative 6-carboxy-5,6,7,8-tetrahydropterin synthase (163 aa).

H18 lines the Zn(2+) pocket. The Proton acceptor role is filled by C26. 2 residues coordinate Zn(2+): H30 and H32. Active-site charge relay system residues include H70 and E148.

This sequence belongs to the PTPS family. QueD subfamily. Zn(2+) serves as cofactor.

It carries out the reaction 7,8-dihydroneopterin 3'-triphosphate + H2O = 6-carboxy-5,6,7,8-tetrahydropterin + triphosphate + acetaldehyde + 2 H(+). It participates in purine metabolism; 7-cyano-7-deazaguanine biosynthesis. Functionally, catalyzes the conversion of 7,8-dihydroneopterin triphosphate (H2NTP) to 6-carboxy-5,6,7,8-tetrahydropterin (CPH4) and acetaldehyde. This is Putative 6-carboxy-5,6,7,8-tetrahydropterin synthase (queD) from Methanocaldococcus jannaschii (strain ATCC 43067 / DSM 2661 / JAL-1 / JCM 10045 / NBRC 100440) (Methanococcus jannaschii).